A 1088-amino-acid polypeptide reads, in one-letter code: Methionine S-methyltransferase (1088 aa).

It belongs to the class I-like SAM-binding methyltransferase superfamily. Homotetramer.

It is found in the cytoplasm. It carries out the reaction L-methionine + S-adenosyl-L-methionine = S-methyl-L-methionine + S-adenosyl-L-homocysteine. Catalyzes the S-methylmethionine (SMM) biosynthesis from adenosyl-L-homocysteine (AdoMet) and methionine. SMM biosynthesis (by MMT1) and degradation (by HMT-1, HMT-2 and HMT-3) constitute the SMM cycle in plants, which is probably required to achieve short term control of AdoMet level. Also able to catalyze the selenium-methylmethionine (SeMM) from AdoMet and selenium-methionine (SeMet). May play a role in phoem sulfur transport; such function is however not essential. This is Methionine S-methyltransferase (MMT1) from Wollastonia biflora (Beach sunflower).